Reading from the N-terminus, the 595-residue chain is Phenylalanine--tRNA ligase beta subunit (595 aa).

The interval 86 to 90 (KLSKP) is 3'-CCA residue in tRNA. One can recognise a B5 domain in the interval 292–370 (FNDRIMDVSI…VGYGFNNLPK (79 aa)). The Mg(2+) site is built by D348, D354, E357, and D358.

This sequence belongs to the phenylalanyl-tRNA synthetase beta subunit family. Type 2 subfamily. Tetramer of two alpha and two beta subunits. The cofactor is Mg(2+).

The protein resides in the cytoplasm. The catalysed reaction is tRNA(Phe) + L-phenylalanine + ATP = L-phenylalanyl-tRNA(Phe) + AMP + diphosphate + H(+). The sequence is that of Phenylalanine--tRNA ligase beta subunit (FRS1) from Saccharomyces cerevisiae (strain ATCC 204508 / S288c) (Baker's yeast).